We begin with the raw amino-acid sequence, 317 residues long: Acetyl-coenzyme A carboxylase carboxyl transferase subunit alpha (317 aa).

Residues 40 to 293 enclose the CoA carboxyltransferase C-terminal domain; it reads LEVRVREAIV…GDVIANALGE (254 aa).

This sequence belongs to the AccA family. Acetyl-CoA carboxylase is a heterohexamer composed of biotin carboxyl carrier protein (AccB), biotin carboxylase (AccC) and two subunits each of ACCase subunit alpha (AccA) and ACCase subunit beta (AccD).

The protein localises to the cytoplasm. The enzyme catalyses N(6)-carboxybiotinyl-L-lysyl-[protein] + acetyl-CoA = N(6)-biotinyl-L-lysyl-[protein] + malonyl-CoA. It participates in lipid metabolism; malonyl-CoA biosynthesis; malonyl-CoA from acetyl-CoA: step 1/1. In terms of biological role, component of the acetyl coenzyme A carboxylase (ACC) complex. First, biotin carboxylase catalyzes the carboxylation of biotin on its carrier protein (BCCP) and then the CO(2) group is transferred by the carboxyltransferase to acetyl-CoA to form malonyl-CoA. This Rhizobium etli (strain ATCC 51251 / DSM 11541 / JCM 21823 / NBRC 15573 / CFN 42) protein is Acetyl-coenzyme A carboxylase carboxyl transferase subunit alpha.